A 35-amino-acid chain; its full sequence is Cecropin-B (35 aa).

Leu35 carries the leucine amide modification.

Belongs to the cecropin family.

The protein localises to the secreted. In terms of biological role, cecropins have lytic and antibacterial activity against several Gram-positive and Gram-negative bacteria. This is Cecropin-B from Antheraea pernyi (Chinese oak silk moth).